The chain runs to 196 residues: uncharacterized protein (196 aa).

This sequence belongs to the NAD(P)H dehydrogenase (quinone) family.

This is an uncharacterized protein from Escherichia coli (strain K12).